A 291-amino-acid polypeptide reads, in one-letter code: Deaminated glutathione amidase (291 aa).

The CN hydrolase domain maps to 13–268 (KRIGLGQITS…NDIAFVDIDL (256 aa)). The active-site Proton acceptor is glutamate 52. Lysine 130 functions as the Proton donor in the catalytic mechanism. Cysteine 172 (nucleophile) is an active-site residue.

This sequence belongs to the carbon-nitrogen hydrolase superfamily. NIT1/NIT2 family.

It carries out the reaction N-(4-oxoglutaryl)-L-cysteinylglycine + H2O = L-cysteinylglycine + 2-oxoglutarate. In terms of biological role, catalyzes the hydrolysis of the amide bond in N-(4-oxoglutarate)-L-cysteinylglycine (deaminated glutathione), a metabolite repair reaction to dispose of the harmful deaminated glutathione. This is Deaminated glutathione amidase (nit1-1) from Dictyostelium discoideum (Social amoeba).